The sequence spans 341 residues: Methionine import ATP-binding protein MetN 1 (341 aa).

Positions 2 to 241 constitute an ABC transporter domain; it reads IEFKNVNKVF…PQTNTAKNFV (240 aa). 38-45 contacts ATP; that stretch reads GYSGAGKS.

It belongs to the ABC transporter superfamily. Methionine importer (TC 3.A.1.24) family. The complex is composed of two ATP-binding proteins (MetN), two transmembrane proteins (MetI) and a solute-binding protein (MetQ).

It is found in the cell membrane. The enzyme catalyses L-methionine(out) + ATP + H2O = L-methionine(in) + ADP + phosphate + H(+). It carries out the reaction D-methionine(out) + ATP + H2O = D-methionine(in) + ADP + phosphate + H(+). Part of the ABC transporter complex MetNIQ involved in methionine import. Responsible for energy coupling to the transport system. This is Methionine import ATP-binding protein MetN 1 from Staphylococcus epidermidis (strain ATCC 35984 / DSM 28319 / BCRC 17069 / CCUG 31568 / BM 3577 / RP62A).